The primary structure comprises 128 residues: Disintegrin gabonin-1 (128 aa).

An N-terminal signal peptide occupies residues 1–20; it reads MIQVLLVIICLAVFPYQGSS. A propeptide spanning residues 21 to 47 is cleaved from the precursor; that stretch reads IILESGNVNDYEIVYPKKVTVLPTGAM. Residues 47 to 112 enclose the Disintegrin domain; that stretch reads MNSAHPCCDP…DCPRNPNKGE (66 aa). Cystine bridges form between C53–C76, C67–C73, C72–C97, and C85–C104. The Cell attachment site motif lies at 89–91; the sequence is RGD. The interval 108 to 128 is disordered; the sequence is PNKGESDELEWSAAATGSVLM.

This sequence belongs to the disintegrin family. Dimeric disintegrin subfamily. Heterodimer with bitisgabonin (bitisgabonin-1 is the name of the heterodimer); disulfide-linked. As to expression, expressed by the venom gland.

It is found in the secreted. In terms of biological role, the heterodimer bitisgabonin-1 is a potent inhibitor of the adhesion of the RGD-dependent integrin alpha-5/beta-1 (ITGA5/ITGB1) to immobilized fibronectin. The sequence is that of Disintegrin gabonin-1 from Bitis gabonica (Gaboon adder).